Here is a 151-residue protein sequence, read N- to C-terminus: Ribosome maturation factor RimP (151 aa).

This sequence belongs to the RimP family.

The protein resides in the cytoplasm. In terms of biological role, required for maturation of 30S ribosomal subunits. This is Ribosome maturation factor RimP from Caldanaerobacter subterraneus subsp. tengcongensis (strain DSM 15242 / JCM 11007 / NBRC 100824 / MB4) (Thermoanaerobacter tengcongensis).